A 283-amino-acid chain; its full sequence is uncharacterized protein (283 aa).

A signal peptide spans methionine 1–alanine 21. Residue cysteine 22 is the site of N-palmitoyl cysteine attachment. Cysteine 22 is lipidated: S-diacylglycerol cysteine.

The protein belongs to the MG439/MG440 family.

It localises to the cell membrane. This is an uncharacterized protein from Mycoplasma pneumoniae (strain ATCC 29342 / M129 / Subtype 1) (Mycoplasmoides pneumoniae).